Here is a 252-residue protein sequence, read N- to C-terminus: Flap endonuclease Xni (252 aa).

Asp-105 contacts Mg(2+). In terms of domain architecture, 5'-3' exonuclease spans 161–251 (VESTQFIDYL…NVNLKQFRIE (91 aa)). The K(+) site is built by Leu-172, Ala-173, Pro-181, Val-183, and Ile-186. Residues 185–190 (GIGPKS) form an interaction with DNA region.

Belongs to the Xni family. It depends on Mg(2+) as a cofactor. K(+) serves as cofactor.

Has flap endonuclease activity. During DNA replication, flap endonucleases cleave the 5'-overhanging flap structure that is generated by displacement synthesis when DNA polymerase encounters the 5'-end of a downstream Okazaki fragment. The polypeptide is Flap endonuclease Xni (Shewanella halifaxensis (strain HAW-EB4)).